Reading from the N-terminus, the 255-residue chain is F-box only protein 44 (255 aa).

Residues 3-50 (VGNINELPENILLELFTHVPARQLLLNCRLVCSLWRDLIDLVTLWKRK) form the F-box domain. One can recognise an FBA domain in the interval 71 to 252 (FYFLRSLHRN…VTNSSITIGP (182 aa)).

As to quaternary structure, part of a SCF (SKP1-cullin-F-box) protein ligase complex. Interacts with SKP1 and CUL1. As to expression, abundantly expressed in brain and kidney. Expressed at lower levels in heart, spleen and liver.

Its function is as follows. Substrate-recognition component of the SCF (SKP1-CUL1-F-box protein)-type E3 ubiquitin ligase complex. The sequence is that of F-box only protein 44 (FBXO44) from Homo sapiens (Human).